The chain runs to 194 residues: Holliday junction branch migration complex subunit RuvA (194 aa).

The interval 1–61 (MYDFLTGIIK…DNQISLYGFK (61 aa)) is domain I. The tract at residues 62–139 (TVKERNLFQK…GDFSKNIAPM (78 aa)) is domain II. The tract at residues 139-143 (MKNLL) is flexible linker. The segment at 144–194 (ENSAELDDALAALVALGFSSKEVNKINPKLASLGELTTDAYIQKGLKLLTK) is domain III.

Belongs to the RuvA family. In terms of assembly, homotetramer. Forms an RuvA(8)-RuvB(12)-Holliday junction (HJ) complex. HJ DNA is sandwiched between 2 RuvA tetramers; dsDNA enters through RuvA and exits via RuvB. An RuvB hexamer assembles on each DNA strand where it exits the tetramer. Each RuvB hexamer is contacted by two RuvA subunits (via domain III) on 2 adjacent RuvB subunits; this complex drives branch migration. In the full resolvosome a probable DNA-RuvA(4)-RuvB(12)-RuvC(2) complex forms which resolves the HJ.

The protein localises to the cytoplasm. In terms of biological role, the RuvA-RuvB-RuvC complex processes Holliday junction (HJ) DNA during genetic recombination and DNA repair, while the RuvA-RuvB complex plays an important role in the rescue of blocked DNA replication forks via replication fork reversal (RFR). RuvA specifically binds to HJ cruciform DNA, conferring on it an open structure. The RuvB hexamer acts as an ATP-dependent pump, pulling dsDNA into and through the RuvAB complex. HJ branch migration allows RuvC to scan DNA until it finds its consensus sequence, where it cleaves and resolves the cruciform DNA. The protein is Holliday junction branch migration complex subunit RuvA of Oenococcus oeni (strain ATCC BAA-331 / PSU-1).